A 161-amino-acid polypeptide reads, in one-letter code: UPF0225 protein HI_0277 (161 aa).

The protein belongs to the UPF0225 family.

The sequence is that of UPF0225 protein HI_0277 from Haemophilus influenzae (strain ATCC 51907 / DSM 11121 / KW20 / Rd).